The primary structure comprises 276 residues: Dermonecrotic toxin LafSicTox-betaIE2 (276 aa).

The active site involves histidine 5. Positions 25 and 27 each coordinate Mg(2+). The active-site Nucleophile is the histidine 41. Intrachain disulfides connect cysteine 45/cysteine 51 and cysteine 47/cysteine 189. Aspartate 85 contributes to the Mg(2+) binding site.

Belongs to the arthropod phospholipase D family. Class II subfamily. Mg(2+) is required as a cofactor. Expressed by the venom gland.

The protein resides in the secreted. It carries out the reaction an N-(acyl)-sphingosylphosphocholine = an N-(acyl)-sphingosyl-1,3-cyclic phosphate + choline. The catalysed reaction is an N-(acyl)-sphingosylphosphoethanolamine = an N-(acyl)-sphingosyl-1,3-cyclic phosphate + ethanolamine. It catalyses the reaction a 1-acyl-sn-glycero-3-phosphocholine = a 1-acyl-sn-glycero-2,3-cyclic phosphate + choline. The enzyme catalyses a 1-acyl-sn-glycero-3-phosphoethanolamine = a 1-acyl-sn-glycero-2,3-cyclic phosphate + ethanolamine. Functionally, dermonecrotic toxins cleave the phosphodiester linkage between the phosphate and headgroup of certain phospholipids (sphingolipid and lysolipid substrates), forming an alcohol (often choline) and a cyclic phosphate. This toxin acts on sphingomyelin (SM). It may also act on ceramide phosphoethanolamine (CPE), lysophosphatidylcholine (LPC) and lysophosphatidylethanolamine (LPE), but not on lysophosphatidylserine (LPS), and lysophosphatidylglycerol (LPG). It acts by transphosphatidylation, releasing exclusively cyclic phosphate products as second products. Induces dermonecrosis, hemolysis, increased vascular permeability, edema, inflammatory response, and platelet aggregation. The polypeptide is Dermonecrotic toxin LafSicTox-betaIE2 (Loxosceles aff. spinulosa (strain GJB-2008) (Recluse spider)).